The primary structure comprises 244 residues: Ribosomal RNA small subunit methyltransferase G (244 aa).

S-adenosyl-L-methionine is bound by residues glycine 79, phenylalanine 84, 130–131 (AE), and arginine 150. Residues 221–244 (KKPSPKRYPRKPGTPAKQPLTAPM) form a disordered region.

This sequence belongs to the methyltransferase superfamily. RNA methyltransferase RsmG family.

The protein resides in the cytoplasm. Functionally, specifically methylates the N7 position of a guanine in 16S rRNA. The polypeptide is Ribosomal RNA small subunit methyltransferase G (Lactiplantibacillus plantarum (strain ATCC BAA-793 / NCIMB 8826 / WCFS1) (Lactobacillus plantarum)).